A 333-amino-acid chain; its full sequence is Tetraacyldisaccharide 4'-kinase (333 aa).

Residue 60-67 (TVGGTGKT) participates in ATP binding.

The protein belongs to the LpxK family.

The enzyme catalyses a lipid A disaccharide + ATP = a lipid IVA + ADP + H(+). It functions in the pathway glycolipid biosynthesis; lipid IV(A) biosynthesis; lipid IV(A) from (3R)-3-hydroxytetradecanoyl-[acyl-carrier-protein] and UDP-N-acetyl-alpha-D-glucosamine: step 6/6. Transfers the gamma-phosphate of ATP to the 4'-position of a tetraacyldisaccharide 1-phosphate intermediate (termed DS-1-P) to form tetraacyldisaccharide 1,4'-bis-phosphate (lipid IVA). The polypeptide is Tetraacyldisaccharide 4'-kinase (Pseudomonas putida (strain GB-1)).